A 230-amino-acid chain; its full sequence is Claudin-2 (230 aa).

The Cytoplasmic segment spans residues 1-7 (MASLGLQ). A helical transmembrane segment spans residues 8 to 28 (LVGYVLGLLGLLGTVIAMLLP). Topologically, residues 29-81 (SWRTSSYVGASIVTAVGFSKGLWMECATHSTGITQCDIYSTMLGLPADIQAAQ) are extracellular. An intrachain disulfide couples Cys54 to Cys64. Residues 82–102 (AMMVTSSAMSSLACIVSVVGM) traverse the membrane as a helical segment. The Cytoplasmic segment spans residues 103–116 (RCTVFFQESRAKDR). The chain crosses the membrane as a helical span at residues 117–137 (VAVVGGVFFILGGLLGFIPVA). Topologically, residues 138-162 (WNLHGILRDFYSPLVPDSMKFEIGE) are extracellular. The chain crosses the membrane as a helical span at residues 163-183 (ALYLGIISSLFSLIAGIFLCF). The Cytoplasmic portion of the chain corresponds to 184-230 (SCSPQGNRSNYYDAYQAQPLATRSSPRPGQAPKGKSEFNSYSLTGYV). The segment at 205–230 (TRSSPRPGQAPKGKSEFNSYSLTGYV) is disordered. Residue Lys218 forms a Glycyl lysine isopeptide (Lys-Gly) (interchain with G-Cter in SUMO) linkage. A phosphoserine mark is found at Ser219 and Ser223. Residues 220-230 (EFNSYSLTGYV) show a composition bias toward polar residues. Positions 229-230 (YV) are interaction with TJP1, TJP2 and TJP3.

This sequence belongs to the claudin family. As to quaternary structure, can form homo- and heteropolymers with other claudins to mediate paracellular barrier and channel functions of tight junctions in response to physiological stimuli. Homopolymers interact with CLDN3, but not CLDN1, homopolymers. Directly interacts with TJP1/ZO-1, TJP2/ZO-2 and TJP3/ZO-3. Post-translationally, the disulfide bond is necessary for pore formation, but is not required for correct protein trafficking.

The protein localises to the cell junction. Its subcellular location is the tight junction. The protein resides in the cell membrane. It carries out the reaction Na(+)(in) = Na(+)(out). The enzyme catalyses K(+)(in) = K(+)(out). It catalyses the reaction Rb(+)(in) = Rb(+)(out). The catalysed reaction is Li(+)(in) = Li(+)(out). It carries out the reaction Cs(+)(in) = Cs(+)(out). The enzyme catalyses Ca(2+)(in) = Ca(2+)(out). It catalyses the reaction methylamine(out) = methylamine(in). The catalysed reaction is choline(out) = choline(in). It carries out the reaction H2O(in) = H2O(out). Its function is as follows. Forms paracellular channels: polymerizes in tight junction strands with cation- and water-selective channels through the strands, conveying epithelial permeability in a process known as paracellular tight junction permeability. In intestinal epithelium, allows for sodium and water fluxes from the peritoneal side to the lumen of the intestine to regulate nutrient absorption and clear enteric pathogens as part of mucosal immune response. In kidney, allows passive sodium and calcium reabsorption across proximal tubules from the lumen back to the bloodstream. In the hepatobiliary tract, allows paracellular water and cation fluxes in the hepatic perivenous areas and biliary epithelium to generate bile flow and maintain osmotic gradients. The polypeptide is Claudin-2 (CLDN2) (Bos taurus (Bovine)).